Reading from the N-terminus, the 335-residue chain is SAM pointed domain-containing Ets transcription factor (335 aa).

Over residues Met1–Pro20 the composition is skewed to low complexity. 2 disordered regions span residues Met1–Arg25 and Ala75–Ala100. Residues Glu129 to Ala213 enclose the PNT domain. Positions Ile249 to Val332 form a DNA-binding region, ETS.

It belongs to the ETS family. Interacts with the DNA-binding domain of the androgen receptor. Interacts with NKX3-1. As to expression, expressed in a very restricted set of primarily hormone-regulated epithelial tissues with particularly high expression in the prostate gland. Significantly lower expression is seen in other hormone regulated tissues such as mammary gland, salivary gland, and ovary. Expressed in prostate carcinoma cells.

Its subcellular location is the nucleus. Functionally, may function as an androgen-independent transactivator of the prostate-specific antigen (PSA) promoter. Binds to 5'-GGAT-3' DNA sequences. May play a role in the regulation of the prostate gland and/or prostate cancer development. Acts as a transcriptional activator for SERPINB5 promoter. The sequence is that of SAM pointed domain-containing Ets transcription factor (SPDEF) from Homo sapiens (Human).